Reading from the N-terminus, the 293-residue chain is Aquaporin-6 (293 aa).

Topologically, residues 1 to 22 (MEPGLCSRAYLLVGGLWTAISK) are cytoplasmic. Residues 23 to 43 (ALFAEFLATGLYVFFGVGSVL) form a helical membrane-spanning segment. Residues 44 to 51 (PWPVALPS) are Extracellular-facing. Residues 52–70 (VLQIAITFNLATATAVQIS) traverse the membrane as a helical segment. Over 71–75 (WKTSG) the chain is Cytoplasmic. An intramembrane region (discontinuously helical) is located at residues 76 to 85 (AHANPAVTLA). An NPA 1 motif is present at residues 79–81 (NPA). At 86–96 (YLVGSHISLPR) the chain is on the cytoplasmic side. Residues 97 to 118 (AMAYIAAQLAGATAGAALLYGV) traverse the membrane as a helical segment. The Extracellular segment spans residues 119-138 (TPGGIRETLGVNVVHNSTST). A glycan (N-linked (GlcNAc...) asparagine) is linked at asparagine 134. A helical transmembrane segment spans residues 139 to 159 (GQAVAVELVLTLQLVLCVFAS). Over 160-165 (MDGRQT) the chain is Cytoplasmic. Residues 166-185 (LASPAAMIGTSVALGHLIGI) traverse the membrane as a helical segment. The Extracellular segment spans residues 186–189 (YFTG). Positions 190–202 (CSMNPARSFGPAV) form an intramembrane region, discontinuously helical. The NPA 2 signature appears at 193 to 195 (NPA). Residues 203–210 (IVGKFAVH) are Extracellular-facing. A helical membrane pass occupies residues 211–231 (WIFWVGPLTGAVLASLIYNFI). The Cytoplasmic segment spans residues 232-293 (LFPDTKTVAQ…RSFSFTLGLC (62 aa)).

This sequence belongs to the MIP/aquaporin (TC 1.A.8) family. Homotetramer; each monomer provides an independent solute pore.

It is found in the cytoplasmic vesicle membrane. It catalyses the reaction nitrate(in) = nitrate(out). The catalysed reaction is iodide(out) = iodide(in). It carries out the reaction bromide(in) = bromide(out). The enzyme catalyses chloride(in) = chloride(out). It catalyses the reaction Na(+)(in) = Na(+)(out). The catalysed reaction is H2O(in) = H2O(out). It carries out the reaction CO2(out) = CO2(in). The enzyme catalyses NH4(+)(in) = NH4(+)(out). Functionally, aquaporins form homotetrameric transmembrane channels, with each monomer independently mediating water transport across the plasma membrane along its osmotic gradient. Unlike classical aquaporins, AQP6 is an intracellular channel with selective anion permeability, particularly for nitrate, and exhibits very low water permeability. It may also facilitate the transport of gases, such as CO2 and NH4(+), as demonstrated in vitro. The chain is Aquaporin-6 from Mus musculus (Mouse).